The chain runs to 334 residues: MQDRLISGTEKPEDHFDRAIRPTSLADYIGQPVVREQMEIFIGAARGRGEALDHTLIFGPPGLGKTTLANIIAREMGGNLKSTSGPVLERAGDLAAMLTNLEEGDVLFIDEIHRLSPVIEEILYPAMEDYQLDIMIGEGPAARSIKLDLPPFTLVAATTRAGLLTSPLRDRFGIVQRLEFYSVEDLTHIVSRSANLMDVPITVEGAEEVARRSRGTPRIANRLLRRVRDYAQVKGTGEVNHEMAQRALDMLNVDKAGLDTLDRRYLSMLLERFDGGPAGVEALAAAMAEDSGTLEDVIEPYLIQQGYVMRTARGRIATNQSYLQFGMTPPEPKN.

The segment at 1 to 181 is large ATPase domain (RuvB-L); the sequence is MQDRLISGTE…FGIVQRLEFY (181 aa). ATP is bound by residues I20, R21, G62, K65, T66, T67, 128-130, R171, Y181, and R218; that span reads EDY. T66 contacts Mg(2+). The tract at residues 182 to 252 is small ATPAse domain (RuvB-S); that stretch reads SVEDLTHIVS…MAQRALDMLN (71 aa). Positions 255 to 334 are head domain (RuvB-H); the sequence is KAGLDTLDRR…FGMTPPEPKN (80 aa). DNA contacts are provided by R310 and R315.

The protein belongs to the RuvB family. Homohexamer. Forms an RuvA(8)-RuvB(12)-Holliday junction (HJ) complex. HJ DNA is sandwiched between 2 RuvA tetramers; dsDNA enters through RuvA and exits via RuvB. An RuvB hexamer assembles on each DNA strand where it exits the tetramer. Each RuvB hexamer is contacted by two RuvA subunits (via domain III) on 2 adjacent RuvB subunits; this complex drives branch migration. In the full resolvosome a probable DNA-RuvA(4)-RuvB(12)-RuvC(2) complex forms which resolves the HJ.

It localises to the cytoplasm. It carries out the reaction ATP + H2O = ADP + phosphate + H(+). The RuvA-RuvB-RuvC complex processes Holliday junction (HJ) DNA during genetic recombination and DNA repair, while the RuvA-RuvB complex plays an important role in the rescue of blocked DNA replication forks via replication fork reversal (RFR). RuvA specifically binds to HJ cruciform DNA, conferring on it an open structure. The RuvB hexamer acts as an ATP-dependent pump, pulling dsDNA into and through the RuvAB complex. RuvB forms 2 homohexamers on either side of HJ DNA bound by 1 or 2 RuvA tetramers; 4 subunits per hexamer contact DNA at a time. Coordinated motions by a converter formed by DNA-disengaged RuvB subunits stimulates ATP hydrolysis and nucleotide exchange. Immobilization of the converter enables RuvB to convert the ATP-contained energy into a lever motion, pulling 2 nucleotides of DNA out of the RuvA tetramer per ATP hydrolyzed, thus driving DNA branch migration. The RuvB motors rotate together with the DNA substrate, which together with the progressing nucleotide cycle form the mechanistic basis for DNA recombination by continuous HJ branch migration. Branch migration allows RuvC to scan DNA until it finds its consensus sequence, where it cleaves and resolves cruciform DNA. In Acinetobacter baumannii (strain AB307-0294), this protein is Holliday junction branch migration complex subunit RuvB.